We begin with the raw amino-acid sequence, 543 residues long: Adenosine deaminase 2 (543 aa).

An N-terminal signal peptide occupies residues 1-26 (MFLKFKNIFFIVLTLSIVFNGLIVNS). Positions 31-54 (INNKNNNNNNNNKDLSSSESGSSS) are enriched in low complexity. The tract at residues 31–58 (INNKNNNNNNNNKDLSSSESGSSSDINP) is disordered. A glycan (N-linked (GlcNAc...) asparagine) is linked at Asn-126. Residues His-144 and His-146 each contribute to the Zn(2+) site. Residue Asn-179 is glycosylated (N-linked (GlcNAc...) asparagine). 232–239 (WRKFDGIF) is a substrate binding site. N-linked (GlcNAc...) asparagine glycosylation is found at Asn-309 and Asn-326. Residue Gly-355 coordinates substrate. Zn(2+) is bound at residue His-389. Glu-392 acts as the Proton donor in catalysis. The N-linked (GlcNAc...) asparagine glycan is linked to Asn-397. The Proton acceptor role is filled by His-414. Asp-471 contributes to the Zn(2+) binding site. Residue Asp-472 coordinates substrate. 2 N-linked (GlcNAc...) asparagine glycosylation sites follow: Asn-508 and Asn-514.

The protein belongs to the metallo-dependent hydrolases superfamily. Adenosine and AMP deaminases family. ADGF subfamily. The cofactor is Zn(2+).

The protein resides in the secreted. The catalysed reaction is adenosine + H2O + H(+) = inosine + NH4(+). In terms of biological role, adenosine deaminase that may contribute to the degradation of extracellular adenosine, a signaling molecule that controls a variety of cellular responses. May play a role in the regulation of cell proliferation. The protein is Adenosine deaminase 2 of Dictyostelium discoideum (Social amoeba).